Here is a 105-residue protein sequence, read N- to C-terminus: uncharacterized protein (105 aa).

This is an uncharacterized protein from Homo sapiens (Human).